Consider the following 182-residue polypeptide: Ribosome-recycling factor (182 aa).

This sequence belongs to the RRF family.

It localises to the cytoplasm. Functionally, responsible for the release of ribosomes from messenger RNA at the termination of protein biosynthesis. May increase the efficiency of translation by recycling ribosomes from one round of translation to another. The protein is Ribosome-recycling factor of Prochlorococcus marinus (strain MIT 9312).